The sequence spans 236 residues: MKDFLPAFWAVIPAAGIGARMAADRPKQYLSLGGLTILEHSLLCFLDHPRLKGLVISLAVDDPYWAALPCAHDTRIQRVDGGSERSGSVLNALLHLHAQGASDNDWVLVHDAARPNLARSDLDNLLGELADDPVGGLLAVPARDTLKRADSSGRVLETVDRSLVWQAFTPQMFRLGALHRALADSLVSNVSITDEASAIEWAGQSPRLIEGRSDNIKVTRPEDLEWLRQRRSEFGR.

Belongs to the IspD/TarI cytidylyltransferase family. IspD subfamily.

The enzyme catalyses 2-C-methyl-D-erythritol 4-phosphate + CTP + H(+) = 4-CDP-2-C-methyl-D-erythritol + diphosphate. The protein operates within isoprenoid biosynthesis; isopentenyl diphosphate biosynthesis via DXP pathway; isopentenyl diphosphate from 1-deoxy-D-xylulose 5-phosphate: step 2/6. Functionally, catalyzes the formation of 4-diphosphocytidyl-2-C-methyl-D-erythritol from CTP and 2-C-methyl-D-erythritol 4-phosphate (MEP). This is 2-C-methyl-D-erythritol 4-phosphate cytidylyltransferase from Pseudomonas syringae pv. syringae (strain B728a).